Reading from the N-terminus, the 691-residue chain is Calcium-binding and coiled-coil domain-containing protein 1 (691 aa).

The p300 KIX-binding stretch occupies residues 1-30; it reads MEESPLSRAPSRGGVNFLNVARTYIPNTKV. An N-terminal AD (CTNNB1 binding site) region spans residues 1–190; the sequence is MEESPLSRAP…VQELERALAT (190 aa). Ser4 carries the post-translational modification Phosphoserine. An interaction with GATA1 region spans residues 45–125; sequence SDWIGIFKVE…FQFREPRPMD (81 aa). Coiled-coil stretches lie at residues 145-205, 232-339, and 417-514; these read KATV…YKGI, ELED…AELE, and QSVE…ADEK. The interval 501–691 is C-terminal AD (CTNNB1 binding site); interaction with CCAR1; that stretch reads RKLEARLEKV…FSTQDPFTFE (191 aa). The segment at 513 to 604 is disordered; that stretch reads EKWNEDATTE…SDSEAEDEKS (92 aa). A UBZ1-type zinc finger spans residues 653–679; sequence WKECPICKERFPAESDKDALEDHMDGH. Residues Cys656, Cys659, His675, and His679 each coordinate Zn(2+).

This sequence belongs to the CALCOCO family. Part of a calphoglin complex consisting of CALCOCO1, PPA1 and PGM. Interacts with the bHLH-PAS domains of GRIP1, AHR and ARNT. Interacts with CTNNB1 via both its N- and C-terminal regions. Interacts with EP300. Interacts with CCAR1 (via N-terminus) and GATA1.

Its subcellular location is the cytoplasm. It is found in the nucleus. Functionally, functions as a coactivator for aryl hydrocarbon and nuclear receptors (NR). Recruited to promoters through its contact with the N-terminal basic helix-loop-helix-Per-Arnt-Sim (PAS) domain of transcription factors or coactivators, such as NCOA2. During ER-activation acts synergistically in combination with other NCOA2-binding proteins, such as EP300, CREBBP and CARM1. Involved in the transcriptional activation of target genes in the Wnt/CTNNB1 pathway. Functions as a secondary coactivator in LEF1-mediated transcriptional activation via its interaction with CTNNB1. Coactivator function for nuclear receptors and LEF1/CTNNB1 involves differential utilization of two different activation regions. In association with CCAR1 enhances GATA1- and MED1-mediated transcriptional activation from the gamma-globin promoter during erythroid differentiation of K562 erythroleukemia cells. In terms of biological role, seems to enhance inorganic pyrophosphatase thus activating phosphogluomutase (PMG). Probably functions as a component of the calphoglin complex, which is involved in linking cellular metabolism (phosphate and glucose metabolism) with other core functions including protein synthesis and degradation, calcium signaling and cell growth. This is Calcium-binding and coiled-coil domain-containing protein 1 (CALCOCO1) from Pongo abelii (Sumatran orangutan).